A 105-amino-acid chain; its full sequence is Small ribosomal subunit protein uS10 (105 aa).

It belongs to the universal ribosomal protein uS10 family. As to quaternary structure, part of the 30S ribosomal subunit.

Involved in the binding of tRNA to the ribosomes. In Anaplasma marginale (strain Florida), this protein is Small ribosomal subunit protein uS10.